A 1063-amino-acid polypeptide reads, in one-letter code: Structural polyprotein (1063 aa).

The interval 1–131 (MASTTPITME…LGPPTNPFQA (131 aa)) is disordered. The tract at residues 30 to 69 (GASQPRRPRPPRQRDSSTSGDDSGRDSGGPRRRRGNRGRG) is human C1QBP/SF2P32-binding. A Phosphoserine; by host modification is found at serine 46. Residues 59–69 (PRRRRGNRGRG) are compositionally biased toward basic residues. Over residues 70-87 (QRKDWSRAPPPPEERQEG) the composition is skewed to basic and acidic residues. A compositionally biased stretch (pro residues) spans 93–107 (APKPSRAPPQQPQPP). Residues cysteine 153 and cysteine 197 are joined by a disulfide bond. Residues 279–300 (GAPQAFLAGLLLAAVAVGTARA) form a functions as E2 signal peptide region. Residues 301-534 (GLQPRVDMAA…LWLATANALS (234 aa)) are Extracellular-facing. Residues asparagine 353, asparagine 371, and asparagine 429 are each glycosylated (N-linked (GlcNAc...) asparagine; by host). A helical membrane pass occupies residues 535 to 555 (LDHALAAFVLLVPWVLIFMVC). Residues 556–582 (RRACRRRGAAAALTAVVLQGYNPPAYG) are Cytoplasmic-facing. The functions as E1 signal peptide stretch occupies residues 563–582 (GAAAALTAVVLQGYNPPAYG). Topologically, residues 583–1028 (EEAFTYLCTA…QTWAEWAAAH (446 aa)) are extracellular. Disulfide bonds link cysteine 590–cysteine 595, cysteine 619–cysteine 824, cysteine 641–cysteine 653, cysteine 699–cysteine 712, cysteine 758–cysteine 767, cysteine 807–cysteine 817, cysteine 931–cysteine 934, and cysteine 950–cysteine 983. N-linked (GlcNAc...) asparagine; by host glycosylation occurs at asparagine 658. The Ca(2+) site is built by asparagine 670 and alanine 671. 2 residues coordinate Ca(2+): aspartate 718 and threonine 719. A glycan (N-linked (GlcNAc...) asparagine; by host) is linked at asparagine 791. O-linked (GalNAc...) threonine; by host glycans are attached at residues threonine 1011 and threonine 1012. A helical membrane pass occupies residues 1029-1049 (WWQLTLGAICALPLAGLLACC). Topologically, residues 1050-1063 (AKCLYYLRGAIAPR) are extracellular.

In terms of assembly, homodimer; further assembles into homooligomer. Interacts with human C1QBP. Interacts (via N-terminus) with protease/methyltransferase p150. As to quaternary structure, heterodimer with spike glycoprotein E2. Heterodimer with spike glycoprotein E1. Structural polyprotein: Specific enzymatic cleavages in vivo yield mature proteins. Two signal peptidase-mediated cleavages within the polyprotein produce the structural proteins capsid, E2, and E1. The E2 signal peptide remains attached to the C-terminus of the capsid protein after cleavage by the signal peptidase. Another signal peptide at E2 C-terminus directs E1 to the ER, with a similar mechanism. Post-translationally, contains three N-linked oligosaccharides. In terms of processing, capsid is phosphorylated on Ser-46 by host. This phosphorylation negatively regulates capsid protein RNA-binding activity. Dephosphorylated by human PP1A.

The protein localises to the virion. It localises to the host cytoplasm. It is found in the host mitochondrion. Its subcellular location is the virion membrane. The protein resides in the host Golgi apparatus membrane. In terms of biological role, capsid protein interacts with genomic RNA and assembles into icosahedric core particles 65-70 nm in diameter. The resulting nucleocapsid eventually associates with the cytoplasmic domain of E2 at the cell membrane, leading to budding and formation of mature virions from host Golgi membranes. Phosphorylation negatively regulates RNA-binding activity, possibly delaying virion assembly during the viral replication phase. Capsid protein dimerizes and becomes disulfide-linked in the virion. Modulates genomic RNA replication. Modulates subgenomic RNA synthesis by interacting with human C1QBP/SF2P32. Induces both perinuclear clustering of mitochondria and the formation of electron-dense intermitochondrial plaques, both hallmarks of rubella virus infected cells. Induces apoptosis when expressed in transfected cells. Its function is as follows. Responsible for viral attachment to target host cell, by binding to the cell receptor. Its transport to the plasma membrane depends on interaction with E1 protein. The surface glycoproteins display an irregular helical organization and a pseudo-tetrameric inner nucleocapsid arrangement. Class II viral fusion protein. Fusion activity is inactive as long as E1 is bound to E2 in mature virion. After virus attachment to target cell and clathrin-mediated endocytosis, acidification of the endosome would induce dissociation of E1/E2 heterodimer and concomitant trimerization of the E1 subunits. This E1 homotrimer is fusion active, and promotes release of viral nucleocapsid in cytoplasm after endosome and viral membrane fusion. The cytoplasmic tail of spike glycoprotein E1 modulates virus release. The surface glycoproteins display an irregular helical organization and a pseudo-tetrameric inner nucleocapsid arrangement. This chain is Structural polyprotein, found in Rubella virus (strain Cendehill) (RUBV).